A 549-amino-acid polypeptide reads, in one-letter code: Cytoplasmic trehalase (549 aa).

Residues Arg168, 175–176 (WD), Asn212, 221–223 (RSQ), 292–294 (RDE), and Gly324 each bind substrate. Active-site proton donor/acceptor residues include Asp326 and Glu509. Glu525 is a binding site for substrate.

It belongs to the glycosyl hydrolase 37 family. Monomer.

The protein localises to the cytoplasm. The enzyme catalyses alpha,alpha-trehalose + H2O = alpha-D-glucose + beta-D-glucose. The protein operates within glycan degradation; trehalose degradation; D-glucose from alpha,alpha-trehalose: step 1/1. Hydrolyzes trehalose to glucose. Could be involved, in cells returning to low osmolarity conditions, in the utilization of the accumulated cytoplasmic trehalose, which was synthesized in response to high osmolarity. The chain is Cytoplasmic trehalase from Escherichia coli O157:H7.